The following is a 348-amino-acid chain: MDLPVQPPIEPMLAKAQVKVPDEAGVWSYEPKWDGFRALVFRDGDDVVLQSRNGKDLGRYFPELLDALRDELVEKCVLDGEVVVPRDIAGRVRLDWESLSQRIHPAASRIKMLAEQTPAHFIGFDALALGDRSLLKEPFRVRREALAEAVDNKRWCHVTRTSEDPALGTEWLKTFEGAGLDGVIAKRLDGPYLPGKREMVKVKHHRDADCVAMGYRIHKSGDGIGSILLGLYRDDGELQMVGGAASFTAKDRIKLLAELEPLREGDEMREGDPSRWNSAADKRWTPLRPEKVCEVAYDQMEGNSVEGRRFRHAVKFLRWRPDREPSSCTFDQLDTPLNYDLYDVLEEQ.

K32 acts as the N6-AMP-lysine intermediate in catalysis.

Belongs to the ATP-dependent DNA ligase family. It depends on a divalent metal cation as a cofactor.

It carries out the reaction ATP + (deoxyribonucleotide)n-3'-hydroxyl + 5'-phospho-(deoxyribonucleotide)m = (deoxyribonucleotide)n+m + AMP + diphosphate.. DNA ligase that seals nicks in double-stranded DNA during DNA replication, DNA recombination and DNA repair. Has weak intrinsic nick joining activities and accumulates DNA-adenylate. Acts as a backup for LigD in the Ku-LigD-dependent NHEJ pathway. This Mycolicibacterium smegmatis (strain ATCC 700084 / mc(2)155) (Mycobacterium smegmatis) protein is DNA ligase C1 (ligC).